The primary structure comprises 298 residues: Elongation factor Ts (298 aa).

The involved in Mg(2+) ion dislocation from EF-Tu stretch occupies residues T80–V83.

Belongs to the EF-Ts family.

It localises to the cytoplasm. In terms of biological role, associates with the EF-Tu.GDP complex and induces the exchange of GDP to GTP. It remains bound to the aminoacyl-tRNA.EF-Tu.GTP complex up to the GTP hydrolysis stage on the ribosome. This is Elongation factor Ts from Paracidovorax citrulli (strain AAC00-1) (Acidovorax citrulli).